A 363-amino-acid chain; its full sequence is uncharacterized protein (363 aa).

Helical transmembrane passes span 34 to 54, 60 to 80, 91 to 111, and 112 to 132; these read YVYD…IILW, LALF…TLLV, EIAD…TAAG, and LMFS…PLFL. The span at 232-245 shows a compositional bias: polar residues; sequence SSTTTHSTDSEQIL. A disordered region spans residues 232 to 363; sequence SSTTTHSTDS…SSQKKKPSRK (132 aa). 2 stretches are compositionally biased toward low complexity: residues 246–268 and 275–285; these read TSVS…TPPN and DSNSSDSSSSS. Positions 322–342 are enriched in basic and acidic residues; that stretch reads SRSERNAQHHRNKDQEQRQDS.

Belongs to the chlamydial CPn_0443/CT_005/TC_0273 family.

It is found in the cell membrane. This is an uncharacterized protein from Chlamydia trachomatis serovar D (strain ATCC VR-885 / DSM 19411 / UW-3/Cx).